Reading from the N-terminus, the 126-residue chain is Small ribosomal subunit protein uS8 (126 aa).

It belongs to the universal ribosomal protein uS8 family. In terms of assembly, part of the 30S ribosomal subunit. Contacts proteins S5 and S12.

Its function is as follows. One of the primary rRNA binding proteins, it binds directly to 16S rRNA central domain where it helps coordinate assembly of the platform of the 30S subunit. The polypeptide is Small ribosomal subunit protein uS8 (Nitratidesulfovibrio vulgaris (strain DSM 19637 / Miyazaki F) (Desulfovibrio vulgaris)).